The sequence spans 1087 residues: Platelet-derived growth factor receptor alpha (1087 aa).

An N-terminal signal peptide occupies residues 1–23 (MGTPPRTFLILGCFLTGPLLTLC). Over 24–528 (QLPLPTIVPN…PTLRSELTVA (505 aa)) the chain is Extracellular. Ig-like C2-type domains are found at residues 26-104 (PLPT…YNHT), 116-208 (IYIY…IYIL), 213-312 (QLPV…VHDK), 314-411 (FIHL…SLLI), and 414-517 (PALI…LKLV). Residues Asn-44, Asn-75, Asn-88, and Asn-102 are each glycosylated (N-linked (GlcNAc...) asparagine). A disulfide bond links Cys-49 and Cys-99. Disulfide bonds link Cys-149–Cys-189 and Cys-235–Cys-290. N-linked (GlcNAc...) asparagine glycans are attached at residues Asn-353, Asn-359, Asn-458, and Asn-468. Cysteines 435 and 501 form a disulfide. A helical transmembrane segment spans residues 529 to 549 (AAVLVLLVIVIISLIVLVIIW). At 550–1087 (KQKPRYEIRW…SSDLVEDSFL (538 aa)) the chain is on the cytoplasmic side. A phosphotyrosine; by autocatalysis mark is found at Tyr-572 and Tyr-574. In terms of domain architecture, Protein kinase spans 593–954 (LVLGRILGSG…HLSEIVESLL (362 aa)). ATP contacts are provided by residues 599–607 (LGSGAFGKV) and Lys-627. Phosphotyrosine; by autocatalysis occurs at positions 720, 731, 742, 754, 762, and 768. Residue Asp-818 is the Proton acceptor of the active site. A phosphotyrosine; by autocatalysis mark is found at Tyr-849 and Tyr-988. The span at 1000–1011 (KDRESGFDEQRL) shows a compositional bias: basic and acidic residues. Residues 1000 to 1059 (KDRESGFDEQRLSADSGYITPLPDIDPVSEDELGKRNRHSSQTSEESAIETGSSSSTFIK) form a disordered region. Tyr-1017 bears the Phosphotyrosine; by autocatalysis mark. The segment covering 1039-1057 (SSQTSEESAIETGSSSSTF) has biased composition (polar residues).

The protein belongs to the protein kinase superfamily. Tyr protein kinase family. CSF-1/PDGF receptor subfamily. Interacts with homodimeric PDGFA, PDGFB and PDGFC, and with heterodimers formed by PDGFA and PDGFB. Monomer in the absence of bound ligand. Interaction with dimeric PDGFA, PDGFB and/or PDGFC leads to receptor dimerization, where both PDGFRA homodimers and heterodimers with PDGFRB are observed. In terms of processing, ubiquitinated, leading to its internalization and degradation. Autophosphorylated on tyrosine residues upon ligand binding. Autophosphorylation occurs in trans, i.e. one subunit of the dimeric receptor phosphorylates tyrosine residues on the other subunit.

The protein resides in the cell membrane. It is found in the cell projection. The protein localises to the cilium. It localises to the golgi apparatus. It catalyses the reaction L-tyrosyl-[protein] + ATP = O-phospho-L-tyrosyl-[protein] + ADP + H(+). Its activity is regulated as follows. Present in an inactive conformation in the absence of bound ligand. Binding of PDGFA and/or PDGFB leads to dimerization and activation by autophosphorylation on tyrosine residues. In terms of biological role, tyrosine-protein kinase that acts as a cell-surface receptor for PDGFA, PDGFB and PDGFC and plays an essential role in the regulation of embryonic development, cell proliferation, survival and chemotaxis. Depending on the context, promotes or inhibits cell proliferation and cell migration. Plays an important role in the differentiation of bone marrow-derived mesenchymal stem cells. Required for normal skeleton development. Required for normal development of the gastrointestinal tract. Plays a role in cell migration and chemotaxis in wound healing. Plays a role in platelet activation, secretion of agonists from platelet granules, and in thrombin-induced platelet aggregation. Binding of its cognate ligands - homodimeric PDGFA, homodimeric PDGFB, heterodimers formed by PDGFA and PDGFB or homodimeric PDGFC -leads to the activation of several signaling cascades; the response depends on the nature of the bound ligand and is modulated by the formation of heterodimers between PDGFRA and PDGFRB. Phosphorylates PIK3R1, PLCG1, and PTPN11. Activation of PLCG1 leads to the production of the cellular signaling molecules diacylglycerol and inositol 1,4,5-trisphosphate, mobilization of cytosolic Ca(2+) and the activation of protein kinase C. Phosphorylates PIK3R1, the regulatory subunit of phosphatidylinositol 3-kinase, and thereby mediates activation of the AKT1 signaling pathway. Mediates activation of HRAS and of the MAP kinases MAPK1/ERK2 and/or MAPK3/ERK1. Promotes activation of STAT family members STAT1, STAT3 and STAT5A and/or STAT5B. Receptor signaling is down-regulated by protein phosphatases that dephosphorylate the receptor and its down-stream effectors, and by rapid internalization of the activated receptor. The polypeptide is Platelet-derived growth factor receptor alpha (PDGFRA) (Gallus gallus (Chicken)).